A 512-amino-acid chain; its full sequence is ATP synthase subunit alpha, chloroplastic (512 aa).

170–177 (GDRQTGKT) contributes to the ATP binding site.

It belongs to the ATPase alpha/beta chains family. As to quaternary structure, F-type ATPases have 2 components, CF(1) - the catalytic core - and CF(0) - the membrane proton channel. CF(1) has five subunits: alpha(3), beta(3), gamma(1), delta(1), epsilon(1). CF(0) has four main subunits: a, b, b' and c.

The protein resides in the plastid. The protein localises to the chloroplast thylakoid membrane. The enzyme catalyses ATP + H2O + 4 H(+)(in) = ADP + phosphate + 5 H(+)(out). Produces ATP from ADP in the presence of a proton gradient across the membrane. The alpha chain is a regulatory subunit. This is ATP synthase subunit alpha, chloroplastic from Staurastrum punctulatum (Green alga).